Here is a 152-residue protein sequence, read N- to C-terminus: RxLR effector protein Avrblb1 (152 aa).

A signal peptide spans 1–24; that stretch reads MRSLLLTVLLNLVVLLATTGAVSS. Positions 51–72 match the RxLR-dEER motif; sequence RSLRGDYNNEVTKEPNTSDEER. An RGD RLK-binding motif motif is present at residues 54–56; sequence RGD. Asn66 is a glycosylation site (N-linked (GlcNAc...) asparagine). The w motif stretch occupies residues 99-152; the sequence is QSKTVLRYEDKLFTALYKSGETPRSLRTKHLDKASASVFFNRFKKWYDKNVGPS.

It belongs to the RxLR effector family. Interacts with host defense protein RGA2/Rpi-blb1. Interacts with host legume-type lectin receptor kinase LECRK19.

It is found in the secreted. The protein resides in the host nucleus. The protein localises to the host nucleolus. Its subcellular location is the host cell membrane. In terms of biological role, secreted effector that acts as an elicitor of hypersensitive response (HR) specifically on plants carrying defense protein RGA2/Rpi-blb1. Enhances P.infestans colonization of plant hosts Nicotiana benthamiana and potato Solanum bulbocastanum leaves. Associates with host legume-type lectin receptor kinases and disrupts attachments between the host plasma membrane and cell wall. This is RxLR effector protein Avrblb1 from Phytophthora infestans (strain T30-4) (Potato late blight agent).